The chain runs to 861 residues: Oleate activated transcription factor 3 (861 aa).

A DNA-binding region (zn(2)-C6 fungal-type) is located at residues asparagine 19 to tyrosine 47. Residues serine 52–leucine 61 show a composition bias toward polar residues. Residues serine 52–arginine 99 are disordered.

This sequence belongs to the OAF3 family.

Its subcellular location is the cytoplasm. It localises to the nucleus. The protein resides in the mitochondrion. Functionally, transcriptional inhibitor with a significantly increased number of target genes in response to oleate. This is Oleate activated transcription factor 3 (OAF3) from Saccharomyces cerevisiae (strain JAY291) (Baker's yeast).